Consider the following 115-residue polypeptide: Phosphoribosyl-AMP cyclohydrolase (115 aa).

Asp80 contacts Mg(2+). Cys81 contributes to the Zn(2+) binding site. Asp82 and Asp84 together coordinate Mg(2+). Residues Cys97 and Cys104 each coordinate Zn(2+).

Belongs to the PRA-CH family. In terms of assembly, homodimer. It depends on Mg(2+) as a cofactor. Zn(2+) is required as a cofactor.

The protein resides in the cytoplasm. The catalysed reaction is 1-(5-phospho-beta-D-ribosyl)-5'-AMP + H2O = 1-(5-phospho-beta-D-ribosyl)-5-[(5-phospho-beta-D-ribosylamino)methylideneamino]imidazole-4-carboxamide. Its pathway is amino-acid biosynthesis; L-histidine biosynthesis; L-histidine from 5-phospho-alpha-D-ribose 1-diphosphate: step 3/9. Functionally, catalyzes the hydrolysis of the adenine ring of phosphoribosyl-AMP. The sequence is that of Phosphoribosyl-AMP cyclohydrolase from Mycobacterium avium (strain 104).